Reading from the N-terminus, the 258-residue chain is C1q-related factor (258 aa).

Residues 1-16 (MLLVLVVLIPVLVSSG) form the signal peptide. The segment at 39-117 (GPGAGARTDG…PGLPGAGGSG (79 aa)) is disordered. Residues 67–77 (GPQGKPGRTGK) show a composition bias toward low complexity. The Collagen-like domain maps to 67-115 (GPQGKPGRTGKPGPPGPPGDPGPPGPVGPPGEKGEPGKPGPPGLPGAGG). Pro residues predominate over residues 78–95 (PGPPGPPGDPGPPGPVGP). A C1q domain is found at 125–258 (TTVPRVAFYA…TFSGFIIYSD (134 aa)).

Interacts with ADGRB3. Forms heterooligomers with C1QL4, when proteins are coexpressed; this interaction does not occur after secretion. Expressed in brainstem.

The protein resides in the secreted. In terms of biological role, may regulate the number of excitatory synapses that are formed on hippocampus neurons. Has no effect on inhibitory synapses. This chain is C1q-related factor (C1QL1), found in Homo sapiens (Human).